We begin with the raw amino-acid sequence, 265 residues long: Glutamate racemase (265 aa).

Substrate contacts are provided by residues 12–13 and 44–45; these read DS and YG. Cys75 serves as the catalytic Proton donor/acceptor. Position 76–77 (76–77) interacts with substrate; that stretch reads NT. The active-site Proton donor/acceptor is Cys186. 187 to 188 lines the substrate pocket; the sequence is TH.

The protein belongs to the aspartate/glutamate racemases family.

It carries out the reaction L-glutamate = D-glutamate. Its pathway is cell wall biogenesis; peptidoglycan biosynthesis. Provides the (R)-glutamate required for cell wall biosynthesis. In Pseudomonas putida (strain GB-1), this protein is Glutamate racemase.